A 330-amino-acid polypeptide reads, in one-letter code: uncharacterized protein (330 aa).

The 239-residue stretch at 4–242 folds into the ABC transporter domain; it reads LTISDLVVEY…AGEVLFEQST (239 aa). 40–47 lines the ATP pocket; sequence GPSGCGKT. 210-330 provides a ligand contact to a nucleoside 3',5'-cyclic phosphate; it reads DRVLELMPAQ…LIEHRELASE (121 aa).

This sequence belongs to the ABC transporter superfamily.

This is an uncharacterized protein from Mycobacterium bovis (strain ATCC BAA-935 / AF2122/97).